Reading from the N-terminus, the 308-residue chain is MAESLMDIKRKIASTKKTGQITQAMQMVSGAKLSQIEKRAKKYQIYSDKVRQIVTHLAAGQLLELANAAESDTDSGDKSQVISVASLLQKRPVKKTGYLVITSDRGLVGSYNSTVLKAMMQMIKDDHESPDDYVMMAIGGVGADFFKARGLNLAYEYRGVSDIPTFNEVREIVKTAVTMFDNGVFDELYVCYNHHVNTLTSAFRAEKMLPISDLDVSEVADTNVEYLIEPDLDSVLESILPQYAESLIFGAIMDAKTAEHAASTTAMRSATDNANDLISHLSTQYNRARQAAITTEITEIVGGAAALE.

Belongs to the ATPase gamma chain family. In terms of assembly, F-type ATPases have 2 components, CF(1) - the catalytic core - and CF(0) - the membrane proton channel. CF(1) has five subunits: alpha(3), beta(3), gamma(1), delta(1), epsilon(1). CF(0) has three main subunits: a, b and c.

It is found in the cell membrane. Its function is as follows. Produces ATP from ADP in the presence of a proton gradient across the membrane. The gamma chain is believed to be important in regulating ATPase activity and the flow of protons through the CF(0) complex. The polypeptide is ATP synthase gamma chain (Lacticaseibacillus paracasei (strain ATCC 334 / BCRC 17002 / CCUG 31169 / CIP 107868 / KCTC 3260 / NRRL B-441) (Lactobacillus paracasei)).